Reading from the N-terminus, the 138-residue chain is Translation initiation factor IF-1, chloroplastic (138 aa).

The N-terminal 53 residues, 1–53 (MFTSLHTPILHPRYCHHPTPSCTQFSPLALPPFHRTLSFLAPPPLLPAAPALS), are a transit peptide targeting the chloroplast. Positions 58–133 (AKPDKSGEQK…SKGRIVYRLR (76 aa)) constitute an S1-like domain.

It belongs to the IF-1 family. Component of the 30S ribosomal translation pre-initiation complex which assembles on the 30S ribosome in the order IF-2 and IF-3, IF-1 and N-formylmethionyl-tRNA(fMet); mRNA recruitment can occur at any time during PIC assembly.

The protein localises to the plastid. It localises to the chloroplast. Functionally, one of the essential components for the initiation of protein synthesis. Stabilizes the binding of IF-2 and IF-3 on the 30S subunit to which N-formylmethionyl-tRNA(fMet) subsequently binds. Helps modulate mRNA selection, yielding the 30S pre-initiation complex (PIC). Upon addition of the 50S ribosomal subunit IF-1, IF-2 and IF-3 are released leaving the mature 70S translation initiation complex. This is Translation initiation factor IF-1, chloroplastic (infA) from Glycine max (Soybean).